Consider the following 184-residue polypeptide: F(420)H(2) dehydrogenase subunit B (184 aa).

Residues 1-20 (MGEVKETKTNNSKENPEEEV) form a disordered region. [4Fe-4S] cluster is bound by residues cysteine 61, cysteine 62, cysteine 126, and cysteine 156.

Belongs to the complex I 20 kDa subunit family. As to quaternary structure, the FPO complex is composed of at least 13 different subunits. FAD serves as cofactor. Requires [4Fe-4S] cluster as cofactor.

The protein localises to the cell inner membrane. The enzyme catalyses methanophenazine + reduced coenzyme F420-(gamma-L-Glu)(n) = dihydromethanophenazine + oxidized coenzyme F420-(gamma-L-Glu)(n) + H(+). Functionally, component of the F(420)H(2) dehydrogenase (FPO complex) which is part of the energy-conserving F(420)H(2):heterodisulfide oxidoreductase system. The membrane-bound electron transfer system of the complex plays an important role in the metabolism of methylotrophic methanogens when the organisms grow on methanol or methylamines. Catalyzes the oxidation of methanophenazine to dihydromethanophenazine. It shuttles electrons from F(420)H(2), via FAD and iron-sulfur (Fe-S) centers, to methanophenazine (an electron carrier in the membrane). It couples the redox reaction to proton translocation (for every two electrons transferred, two hydrogen ions are translocated across the cytoplasmic membrane), and thus conserves the redox energy in a proton gradient. It also catalyzes the oxidation of F(420)H(2) with quinones such as 2,3-dimethyl-1,4-naphthoquinone, 2-methyl-1,4-naphthoquinone and tetramethyl-p-benzoquinone. The sequence is that of F(420)H(2) dehydrogenase subunit B (fpoB) from Methanosarcina mazei (strain ATCC BAA-159 / DSM 3647 / Goe1 / Go1 / JCM 11833 / OCM 88) (Methanosarcina frisia).